The following is a 169-amino-acid chain: Adenine phosphoribosyltransferase (169 aa).

The protein belongs to the purine/pyrimidine phosphoribosyltransferase family. In terms of assembly, homodimer.

It is found in the cytoplasm. It catalyses the reaction AMP + diphosphate = 5-phospho-alpha-D-ribose 1-diphosphate + adenine. Its pathway is purine metabolism; AMP biosynthesis via salvage pathway; AMP from adenine: step 1/1. In terms of biological role, catalyzes a salvage reaction resulting in the formation of AMP, that is energically less costly than de novo synthesis. The protein is Adenine phosphoribosyltransferase of Mycoplasmopsis synoviae (strain 53) (Mycoplasma synoviae).